We begin with the raw amino-acid sequence, 238 residues long: Androgen-induced gene 1 protein (238 aa).

The Cytoplasmic portion of the chain corresponds to 1–12 (MALVPCQVLRMA). A helical transmembrane segment spans residues 13–30 (ILLSYCSILCNYKAIEMP). The Extracellular segment spans residues 31-44 (SHQTYGGSWKFLTF). Residues 45–67 (IDLVIQAVFFGICVLTDLSSLLT) form a helical membrane-spanning segment. The Cytoplasmic segment spans residues 68–87 (RGSGNQEQERQLKKLISLRD). A helical transmembrane segment spans residues 88–110 (WMLAVLAFPVGVFVVAVFWIIYA). Residues 111-124 (YDREMIYPKLLDNF) lie on the Extracellular side of the membrane. Residues 125–144 (IPGWLNHGMHTTVLPFILIE) traverse the membrane as a helical segment. Topologically, residues 145–156 (MRTSHHQYPSRS) are cytoplasmic. A helical membrane pass occupies residues 157–179 (SGLTAICTFSVGYILWVCWVHHV). Over 180–193 (TGMWVYPFLEHIGP) the chain is Extracellular. A helical membrane pass occupies residues 194–216 (GARIIFFGSTTILMNFLYLLGEV). At 217–238 (LNNYIWDTQKSMEEEKEKPKLE) the chain is on the cytoplasmic side.

This sequence belongs to the AIG1 family. As to expression, highly expressed in heart, ovary, testis, liver, and kidney, at lower levels in spleen, prostate, brain, skeletal muscle, pancreas, small intestine and colon, and undetected in peripheral blood leukocytes, thymus, lung and placenta. AIG1 expression is higher in hair follicles from males than from females.

The protein localises to the cell membrane. The enzyme catalyses 9-hexadecanoyloxy-octadecanoate + H2O = 9-hydroxy-octadecanoate + hexadecanoate + H(+). The catalysed reaction is 12-hexadecanoyloxy-octadecanoate + H2O = 12-hydroxyoctadecanoate + hexadecanoate + H(+). It carries out the reaction 9-(9Z-hexadecenoyloxy)-octadecanoate + H2O = (9Z)-hexadecenoate + 9-hydroxy-octadecanoate + H(+). It catalyses the reaction 12-(9Z-hexadecenoyloxy)-octadecanoate + H2O = 12-hydroxyoctadecanoate + (9Z)-hexadecenoate + H(+). The enzyme catalyses 13-(9Z-hexadecenoyloxy)-octadecanoate + H2O = 13-hydroxy-octadecanoate + (9Z)-hexadecenoate + H(+). The catalysed reaction is 9-octadecanoyloxy-octadecanoate + H2O = 9-hydroxy-octadecanoate + octadecanoate + H(+). It carries out the reaction 12-octadecanoyloxy-octadecanoate + H2O = 12-hydroxyoctadecanoate + octadecanoate + H(+). It catalyses the reaction 13-octadecanoyloxy-octadecanoate + H2O = 13-hydroxy-octadecanoate + octadecanoate + H(+). The enzyme catalyses 9-(9Z-octadecenoyloxy)-octadecanoate + H2O = 9-hydroxy-octadecanoate + (9Z)-octadecenoate + H(+). The catalysed reaction is 12-(9Z-octadecenoyloxy)-octadecanoate + H2O = 12-hydroxyoctadecanoate + (9Z)-octadecenoate + H(+). It carries out the reaction 13-(9Z-octadecenoyloxy)-octadecanoate + H2O = 13-hydroxy-octadecanoate + (9Z)-octadecenoate + H(+). It catalyses the reaction 5-(9Z-hexadecenoyloxy)-octadecanoate + H2O = 5-hydroxy-octadecanoate + (9Z)-hexadecenoate + H(+). With respect to regulation, inhibited by N-hydroxyhydantoin carbamate JJH260 and beta-lactone KC01. Hydrolyzes bioactive fatty-acid esters of hydroxy-fatty acids (FAHFAs), but not other major classes of lipids. Show a preference for FAHFAs with branching distal from the carboxylate head group of the lipids. The protein is Androgen-induced gene 1 protein (AIG1) of Homo sapiens (Human).